The chain runs to 150 residues: Large ribosomal subunit protein uL11 (150 aa).

It belongs to the universal ribosomal protein uL11 family. As to quaternary structure, part of the ribosomal stalk of the 50S ribosomal subunit. Interacts with L10 and the large rRNA to form the base of the stalk. L10 forms an elongated spine to which L12 dimers bind in a sequential fashion forming a multimeric L10(L12)X complex. One or more lysine residues are methylated.

Its function is as follows. Forms part of the ribosomal stalk which helps the ribosome interact with GTP-bound translation factors. The protein is Large ribosomal subunit protein uL11 of Ureaplasma parvum serovar 3 (strain ATCC 27815 / 27 / NCTC 11736).